The primary structure comprises 147 residues: Ribosome maturation factor RimP (147 aa).

This sequence belongs to the RimP family.

It localises to the cytoplasm. Its function is as follows. Required for maturation of 30S ribosomal subunits. In Thermosipho melanesiensis (strain DSM 12029 / CIP 104789 / BI429), this protein is Ribosome maturation factor RimP.